The primary structure comprises 460 residues: UDP-N-acetylmuramoylalanine--D-glutamate ligase (460 aa).

An ATP-binding site is contributed by 120–126; it reads GSNGKTT.

It belongs to the MurCDEF family.

It localises to the cytoplasm. The catalysed reaction is UDP-N-acetyl-alpha-D-muramoyl-L-alanine + D-glutamate + ATP = UDP-N-acetyl-alpha-D-muramoyl-L-alanyl-D-glutamate + ADP + phosphate + H(+). Its pathway is cell wall biogenesis; peptidoglycan biosynthesis. Its function is as follows. Cell wall formation. Catalyzes the addition of glutamate to the nucleotide precursor UDP-N-acetylmuramoyl-L-alanine (UMA). This chain is UDP-N-acetylmuramoylalanine--D-glutamate ligase, found in Lactobacillus delbrueckii subsp. bulgaricus (strain ATCC 11842 / DSM 20081 / BCRC 10696 / JCM 1002 / NBRC 13953 / NCIMB 11778 / NCTC 12712 / WDCM 00102 / Lb 14).